The sequence spans 485 residues: E3 ubiquitin-protein ligase rnf8 (485 aa).

The 55-residue stretch at V43–I97 folds into the FHA domain. Residues A150–H232 are disordered. Residues G199–A219 are compositionally biased toward basic and acidic residues. The segment covering S221–S230 has biased composition (low complexity). Residues C392–W430 form an RING-type zinc finger.

The protein belongs to the RNF8 family. As to quaternary structure, homodimer. Forms a E2-E3 ubiquitin ligase complex composed of the rnf8 homodimer and a E2 heterodimer of ube2n and ube2v2.

The protein localises to the nucleus. It carries out the reaction S-ubiquitinyl-[E2 ubiquitin-conjugating enzyme]-L-cysteine + [acceptor protein]-L-lysine = [E2 ubiquitin-conjugating enzyme]-L-cysteine + N(6)-ubiquitinyl-[acceptor protein]-L-lysine.. It participates in protein modification; protein ubiquitination. Its function is as follows. E3 ubiquitin-protein ligase that plays a key role in DNA damage signaling via 2 distinct roles: by mediating the 'Lys-63'-linked ubiquitination of histones H2A and H2AX and promoting the recruitment of DNA repair proteins at double-strand breaks (DSBs) sites, and by catalyzing 'Lys-48'-linked ubiquitination to remove target proteins from DNA damage sites. Following DNA DSBs, it is recruited to the sites of damage by ATM-phosphorylated mdc1 and catalyzes the 'Lys-63'-linked ubiquitination of histones H2A and H2AX. H2A ubiquitination also mediates the ATM-dependent transcriptional silencing at regions flanking DSBs in cis, a mechanism to avoid collision between transcription and repair intermediates. Also catalyzes the formation of 'Lys-48'-linked polyubiquitin chains, leading to degradation of substrate proteins. In addition to its function in damage signaling, also plays a role in higher-order chromatin structure by mediating extensive chromatin decondensation. This Danio rerio (Zebrafish) protein is E3 ubiquitin-protein ligase rnf8.